We begin with the raw amino-acid sequence, 226 residues long: V-type proton ATPase subunit E (226 aa).

Belongs to the V-ATPase E subunit family. As to quaternary structure, V-ATPase is a heteromultimeric enzyme composed of a peripheral catalytic V1 complex (components A to H) attached to an integral membrane V0 proton pore complex (components: a, c, c', c'' and d).

Subunit of the peripheral V1 complex of vacuolar ATPase essential for assembly or catalytic function. V-ATPase is responsible for acidifying a variety of intracellular compartments in eukaryotic cells. In Mesembryanthemum crystallinum (Common ice plant), this protein is V-type proton ATPase subunit E (VATE).